The primary structure comprises 99 residues: Putative pterin-4-alpha-carbinolamine dehydratase (99 aa).

It belongs to the pterin-4-alpha-carbinolamine dehydratase family.

It catalyses the reaction (4aS,6R)-4a-hydroxy-L-erythro-5,6,7,8-tetrahydrobiopterin = (6R)-L-erythro-6,7-dihydrobiopterin + H2O. This chain is Putative pterin-4-alpha-carbinolamine dehydratase, found in Saccharolobus islandicus (strain M.16.27) (Sulfolobus islandicus).